A 94-amino-acid chain; its full sequence is Pyrimidine/purine nucleoside phosphorylase (94 aa).

Belongs to the nucleoside phosphorylase PpnP family.

It carries out the reaction a purine D-ribonucleoside + phosphate = a purine nucleobase + alpha-D-ribose 1-phosphate. The enzyme catalyses adenosine + phosphate = alpha-D-ribose 1-phosphate + adenine. It catalyses the reaction cytidine + phosphate = cytosine + alpha-D-ribose 1-phosphate. The catalysed reaction is guanosine + phosphate = alpha-D-ribose 1-phosphate + guanine. It carries out the reaction inosine + phosphate = alpha-D-ribose 1-phosphate + hypoxanthine. The enzyme catalyses thymidine + phosphate = 2-deoxy-alpha-D-ribose 1-phosphate + thymine. It catalyses the reaction uridine + phosphate = alpha-D-ribose 1-phosphate + uracil. The catalysed reaction is xanthosine + phosphate = alpha-D-ribose 1-phosphate + xanthine. Its function is as follows. Catalyzes the phosphorolysis of diverse nucleosides, yielding D-ribose 1-phosphate and the respective free bases. Can use uridine, adenosine, guanosine, cytidine, thymidine, inosine and xanthosine as substrates. Also catalyzes the reverse reactions. The sequence is that of Pyrimidine/purine nucleoside phosphorylase from Vibrio campbellii (strain ATCC BAA-1116).